A 122-amino-acid polypeptide reads, in one-letter code: MSTLSRKQKTQKRHKRLRRNLSGTDQRPRLAVFRSNNHIYAQVIDDVAQNTLCAASTLEKEFLSNSKVNASTCAASTAVGEMLAKRALGKGIKQVVFDRGGSLYHGRVKALAEAARQAGLTF.

Over residues 1–19 the composition is skewed to basic residues; it reads MSTLSRKQKTQKRHKRLRR. Residues 1-26 are disordered; the sequence is MSTLSRKQKTQKRHKRLRRNLSGTDQ.

This sequence belongs to the universal ribosomal protein uL18 family. In terms of assembly, part of the 50S ribosomal subunit; part of the 5S rRNA/L5/L18/L25 subcomplex. Contacts the 5S and 23S rRNAs.

Its function is as follows. This is one of the proteins that bind and probably mediate the attachment of the 5S RNA into the large ribosomal subunit, where it forms part of the central protuberance. The chain is Large ribosomal subunit protein uL18 from Prochlorococcus marinus (strain SARG / CCMP1375 / SS120).